The chain runs to 452 residues: Phosphoglucosamine mutase (452 aa).

Catalysis depends on Ser88, which acts as the Phosphoserine intermediate. 4 residues coordinate Mg(2+): Ser88, Asp234, Asp236, and Asp238. Phosphoserine is present on Ser88.

It belongs to the phosphohexose mutase family. Requires Mg(2+) as cofactor. Activated by phosphorylation.

It catalyses the reaction alpha-D-glucosamine 1-phosphate = D-glucosamine 6-phosphate. Catalyzes the conversion of glucosamine-6-phosphate to glucosamine-1-phosphate. The chain is Phosphoglucosamine mutase from Methanococcus aeolicus (strain ATCC BAA-1280 / DSM 17508 / OCM 812 / Nankai-3).